Reading from the N-terminus, the 192-residue chain is Glycerol-3-phosphate acyltransferase (192 aa).

Helical transmembrane passes span Met-1 to Leu-21, Gly-49 to Leu-69, Glu-80 to Phe-100, Ile-110 to Phe-130, and Ile-143 to Leu-163.

Belongs to the PlsY family. In terms of assembly, probably interacts with PlsX.

The protein resides in the cell inner membrane. The catalysed reaction is an acyl phosphate + sn-glycerol 3-phosphate = a 1-acyl-sn-glycero-3-phosphate + phosphate. The protein operates within lipid metabolism; phospholipid metabolism. Catalyzes the transfer of an acyl group from acyl-phosphate (acyl-PO(4)) to glycerol-3-phosphate (G3P) to form lysophosphatidic acid (LPA). This enzyme utilizes acyl-phosphate as fatty acyl donor, but not acyl-CoA or acyl-ACP. This Anaplasma phagocytophilum (strain HZ) protein is Glycerol-3-phosphate acyltransferase.